A 311-amino-acid chain; its full sequence is Olfactory receptor 1L4 (311 aa).

At 1 to 26 the chain is on the extracellular side; that stretch reads METKNYSSSTSGFILLGLSSNPKLQK. An N-linked (GlcNAc...) asparagine glycan is attached at N5. Residues 27–50 form a helical membrane-spanning segment; the sequence is PLFAIFLIMYLLTAVGNVLIILAI. At 51 to 58 the chain is on the cytoplasmic side; it reads YSDPRLHT. Residues 59 to 80 form a helical membrane-spanning segment; it reads PMYFFLSNLSFMDICFTTVIVP. Residues 81–101 lie on the Extracellular side of the membrane; it reads KMLVNFLSETKIISYVGCLIQ. C98 and C190 form a disulfide bridge. The helical transmembrane segment at 102–121 threads the bilayer; that stretch reads MYFFMAFGNTDSYLLASMAI. Residues 122–140 lie on the Cytoplasmic side of the membrane; the sequence is DRLVAICNPLHYDVVMKPW. A helical transmembrane segment spans residues 141 to 159; that stretch reads HCLLMLLGSCSISHLHSLF. The Extracellular portion of the chain corresponds to 160-197; sequence RVLLMSRLSFCASHIIKHFFCDTQPVLKLSCSDTSSSQ. A helical transmembrane segment spans residues 198-220; sequence MVVMTETLAVIVTPFLCTIFSYL. Topologically, residues 221–237 are cytoplasmic; that stretch reads QIIVTVLRIPSAAGKWK. A helical transmembrane segment spans residues 238–260; that stretch reads AFSTCGSHLTVVVLFYGSVIYVY. Residues 261–273 lie on the Extracellular side of the membrane; sequence FRPLSMYSVMKGR. Residues 274 to 293 traverse the membrane as a helical segment; the sequence is VATVMYTVVTPMLNPFIYSL. The Cytoplasmic segment spans residues 294 to 311; that stretch reads RNKDMKRGLKKLRHRIYS.

Belongs to the G-protein coupled receptor 1 family.

Its subcellular location is the cell membrane. Functionally, odorant receptor. This is Olfactory receptor 1L4 (OR1L4) from Homo sapiens (Human).